A 503-amino-acid polypeptide reads, in one-letter code: Ribonuclease Y (503 aa).

A helical membrane pass occupies residues 2 to 22 (GIIIGLIIVSVALIISLCSLL). In terms of domain architecture, KH spans 193–253 (TTNLVKLPND…IRREIATKTL (61 aa)). The HD domain occupies 319 to 412 (VLLHSVEVAK…VAIADAISAS (94 aa)).

The protein belongs to the RNase Y family.

The protein resides in the cell membrane. Endoribonuclease that initiates mRNA decay. This chain is Ribonuclease Y, found in Mesoplasma florum (strain ATCC 33453 / NBRC 100688 / NCTC 11704 / L1) (Acholeplasma florum).